The sequence spans 261 residues: tRNA pseudouridine synthase A (261 aa).

D51 acts as the Nucleophile in catalysis. Y109 provides a ligand contact to substrate.

The protein belongs to the tRNA pseudouridine synthase TruA family. Homodimer.

It carries out the reaction uridine(38/39/40) in tRNA = pseudouridine(38/39/40) in tRNA. Formation of pseudouridine at positions 38, 39 and 40 in the anticodon stem and loop of transfer RNAs. The sequence is that of tRNA pseudouridine synthase A from Shewanella amazonensis (strain ATCC BAA-1098 / SB2B).